We begin with the raw amino-acid sequence, 308 residues long: Ribosomal RNA small subunit methyltransferase H (308 aa).

S-adenosyl-L-methionine-binding positions include 35–37 (GGH), Asp-55, Phe-79, Asp-100, and Gln-107.

This sequence belongs to the methyltransferase superfamily. RsmH family.

The protein localises to the cytoplasm. The enzyme catalyses cytidine(1402) in 16S rRNA + S-adenosyl-L-methionine = N(4)-methylcytidine(1402) in 16S rRNA + S-adenosyl-L-homocysteine + H(+). Functionally, specifically methylates the N4 position of cytidine in position 1402 (C1402) of 16S rRNA. The polypeptide is Ribosomal RNA small subunit methyltransferase H (Dechloromonas aromatica (strain RCB)).